The chain runs to 248 residues: Ferric nitrobindin-like protein (248 aa).

2 stretches are compositionally biased toward polar residues: residues 1–25 and 32–43; these read MSSD…TNSG and QAVNLAAEQSKS. Positions 1–49 are disordered; sequence MSSDKANNQSPDQGANTPAESTNSGPKLDGNQAVNLAAEQSKSTADKNL. The short motif at 82–88 is the GXWXGXG element; that stretch reads GVWRGQG. The tract at residues 118 to 147 is disordered; sequence SRTWKINPPAEEGAEADGDEASAESAGEPE. Acidic residues predominate over residues 129–139; that stretch reads EGAEADGDEAS.

This sequence belongs to the nitrobindin family.

This chain is Ferric nitrobindin-like protein, found in Corynebacterium urealyticum (strain ATCC 43042 / DSM 7109).